The chain runs to 51 residues: U-Asilidin(1)-Eru1a (51 aa).

Residues 1 to 23 (MANYIDVLSFLAIICATVLATLA) form the signal peptide. Cystine bridges form between C26/C40, C33/C44, and C39/C49.

Belongs to the asilidin-1 family. In terms of tissue distribution, expressed by the venom gland. The most highly expressed peptides U-Asilidin1-Mar1a is around 3000 times higher expressed in the venom thoracic glands compared to its body tissues.

It is found in the secreted. In terms of biological role, induces neurotoxic effect on honeybees, including slow movements, disorientation and paralysis. Since it provokes similar symptoms than omega-atracotoxin, it is probable that it acts in the same way by inhibiting voltage-gated calcium channels. In Eutolmus rufibarbis (Golden-tabbed robberfly), this protein is U-Asilidin(1)-Eru1a.